A 795-amino-acid chain; its full sequence is Mitochondrial inner membrane m-AAA protease component paraplegin (795 aa).

The N-terminal 43 residues, 1 to 43 (MAVLLLLLRALRRGPGPGPRPLWGPGPAWSPGFPARPGRGRPY), are a transit peptide targeting the mitochondrion. The propeptide at 44 to 105 (MASRPPGDLA…GGTFYFNTSR (62 aa)) is removed in mature form. Residues 106–144 (LKQKNKEKDKSKGKAPEEDEEERRRRERDDQMYRERLRT) lie on the Mitochondrial matrix side of the membrane. The segment at 108-133 (QKNKEKDKSKGKAPEEDEEERRRRER) is disordered. Positions 109–133 (KNKEKDKSKGKAPEEDEEERRRRER) are enriched in basic and acidic residues. Residues 145–165 (LLVIAVVMSLLNALSTSGGSI) traverse the membrane as a helical segment. The Mitochondrial intermembrane portion of the chain corresponds to 166–248 (SWNDFVHEML…DRIPVSYKRT (83 aa)). The chain crosses the membrane as a helical span at residues 249–269 (GFFGNALYSVGMTAVGLAILW). Topologically, residues 270-795 (YVFRLAGMTG…LGGEEPTWPK (526 aa)) are mitochondrial matrix. Positions 312, 352, 353, 354, 355, 356, and 357 each coordinate ATP. 3'-nitrotyrosine is present on Tyr-505. Residue His-574 participates in Zn(2+) binding. Residue Glu-575 is part of the active site. Zn(2+) contacts are provided by His-578 and Asp-650. The segment at 701–795 (HEARLLVAKA…LGGEEPTWPK (95 aa)) is interaction with PPIF. The disordered stretch occupies residues 751–795 (PHGPKKMIAPQRWIDAQREKQDLGEEETEETQQPPLGGEEPTWPK).

This sequence in the N-terminal section; belongs to the AAA ATPase family. It in the C-terminal section; belongs to the peptidase M41 family. Forms heterooligomers with AFG3L2; the m-AAA protease is composed of heterohexamers of AFG3L2 and SPG7. Component of the mitochondrial permeability transition pore complex (mPTPC), at least composed of SPG7, VDAC1 and PPIF. Interacts with MAIP1. Zn(2+) is required as a cofactor. Post-translationally, upon import into the mitochondrion, the N-terminal transit peptide is cleaved by the mitochondrial-processing peptidase (MPP) to generate an intermediate form which undergoes a second proteolytic cleavage mediated by proteases AFG3L2 removing an additional N-terminal fragment to generate the proteolytically active mature form. Ubiquitous.

It is found in the mitochondrion inner membrane. It carries out the reaction ATP + H2O = ADP + phosphate + H(+). Functionally, catalytic component of the m-AAA protease, a protease that plays a key role in proteostasis of inner mitochondrial membrane proteins, and which is essential for axonal and neuron development. SPG7 possesses both ATPase and protease activities: the ATPase activity is required to unfold substrates, threading them into the internal proteolytic cavity for hydrolysis into small peptide fragments. The m-AAA protease exerts a dual role in the mitochondrial inner membrane: it mediates the processing of specific regulatory proteins and ensures protein quality control by degrading misfolded polypeptides. Mediates protein maturation of the mitochondrial ribosomal subunit MRPL32/bL32m by catalyzing the cleavage of the presequence of MRPL32/bL32m prior to assembly into the mitochondrial ribosome. Acts as a regulator of calcium in neurons by mediating degradation of SMDT1/EMRE before its assembly with the uniporter complex, limiting the availability of SMDT1/EMRE for MCU assembly and promoting efficient assembly of gatekeeper subunits with MCU. Also regulates mitochondrial calcium by catalyzing degradation of MCU. Plays a role in the formation and regulation of the mitochondrial permeability transition pore (mPTP) and its proteolytic activity is dispensable for this function. The chain is Mitochondrial inner membrane m-AAA protease component paraplegin from Homo sapiens (Human).